Reading from the N-terminus, the 68-residue chain is Venom-like beta-defensin (68 aa).

The signal sequence occupies residues 1–24 (MRLLILFLAVVTLLSLAGPGSAEV). 3 cysteine pairs are disulfide-bonded: cysteine 33/cysteine 60, cysteine 40/cysteine 54, and cysteine 47/cysteine 61.

Highly expressed in intestine, liver and spleen and expressed at lower levels in brain, kidney, lung, testis and venom gland.

It is found in the secreted. Potent antimicrobial peptide that displays activity against S.aureus and P.aeruginosa. Does not inhibit growth of E.coli. This chain is Venom-like beta-defensin, found in Ornithorhynchus anatinus (Duckbill platypus).